The sequence spans 967 residues: MPELNFRAIEEKWQKRWLEAKVFEPNIKDKPKEKKFYITVAFPYLSGHLHVGHARTYTIPDVIARFKRMQGYNVLFPMGWHITGSPIVGIAERIKNRDPHTIWIYRDVYKVPEEILWTFEDPVNIVKYFMKAAKETFIRAGFSVDWSREFYTTSLFPPFSKFIEWQFLKLKEKGYIVKGAHRVRWDPVVGTPLGDHDLMEGEDVPILEYVIIKFELKEGDETIYLPAATLRPETVYGVTNMWINPNATYVKAKVKRGGKEETWIISKEAAYKLSFQDREIEVIEEFKGEKLIGKYVRNPVTGDEVIILPAEFVDPDNATGVVMSVPAHAPFDHVALEDLKRESEILVKYDIDPRIVEEITYISLIKLEGYGEFPAVEEVQKLGIKSQKDREKLEQATKTIYKAEYHKGIFKVPPYDGKPVQEVKELIAKEMMEKGIAEIMYEFAEKNVISRFGNRAVIKIIHDQWFIDYGNSEWKEKARKALARMKIYPETRRAQFEAIIDWLDKKACARKVGLGTPLPWDPEWVIESLSDSTIYMAYYTISRHINRLREEGRLDPEKLTPEFFDYIFLEEFSEEREKELEKKTGIPAEIIHEMKEEFEYWYPLDWRCSGKDLIPNHLTFFIFNHVAIFREEHWPKGIAVNGFGTLEGQKMSKSKGNVLNFIDAIEENGADVVRLYIMSLAEHDSDFDWRRKEVGKLRRQLERFYELISQFAEYEAKENVELKTIDKWLLHRLNKAIEGTTKALEEFRTRTAVQWAFYSIMNDLRWYMRRTEGRDDEAKRFVLRKLADIWVRLMAPFTPHICEELWEKLGGEGFVSLAKWPEPVDEWWNEEVEVEEDFIKSLIEDIKEIIEVAKIESPKRAYIYTAPEWKWKVYEVVAEKREFKSAMAELMKDEEIRKHGKEVAKLVQAIIKERAFDVKRIDEEKVLRESKDFLEKELGLEVIINPEEDKGGKKRQAIPLKPAVFIE.

The short motif at 43 to 53 (PYLSGHLHVGH) is the 'HIGH' region element. The short motif at 650 to 654 (KMSKS) is the 'KMSKS' region element. Lysine 653 is a binding site for ATP.

It belongs to the class-I aminoacyl-tRNA synthetase family.

It localises to the cytoplasm. The catalysed reaction is tRNA(Leu) + L-leucine + ATP = L-leucyl-tRNA(Leu) + AMP + diphosphate. The chain is Leucine--tRNA ligase from Pyrococcus abyssi (strain GE5 / Orsay).